Here is a 356-residue protein sequence, read N- to C-terminus: MKVQQYRLDELAHLVKGELIGEGSLQFSNLASLENAEVNHLTFVNGEKHLDQAKVSRAGAYIVTAALKEHLPEKDNFIIVDNPYLAFAILTHVFDKKISSTGIESTAQIHPSAVISETAYIGHYVVIGENCVVGDNTVIQSHTKLDDNVEVGKDCFIDSHVTITGGSKLRDRVRIHSSTVIGGEGFGFAPYQGKWHRIAQLGSVLIGNDVRIGSNCSIDRGALDNTILEDGVIIDNLVQIAHNVHIGSNTAIAAKCGIAGSTKIGKNCILAGACGVAGHLSIADNVTLTGMSMVTKNISEAGTYSSGTGLFENNHWKKTIVRLRQLADVPLTQITKRLDHIQAQIESLESTFNLRK.

The Proton acceptor role is filled by His242.

Belongs to the transferase hexapeptide repeat family. LpxD subfamily. As to quaternary structure, homotrimer.

It carries out the reaction a UDP-3-O-[(3R)-3-hydroxyacyl]-alpha-D-glucosamine + a (3R)-hydroxyacyl-[ACP] = a UDP-2-N,3-O-bis[(3R)-3-hydroxyacyl]-alpha-D-glucosamine + holo-[ACP] + H(+). It functions in the pathway bacterial outer membrane biogenesis; LPS lipid A biosynthesis. In terms of biological role, catalyzes the N-acylation of UDP-3-O-acylglucosamine using 3-hydroxyacyl-ACP as the acyl donor. Is involved in the biosynthesis of lipid A, a phosphorylated glycolipid that anchors the lipopolysaccharide to the outer membrane of the cell. This Acinetobacter baumannii (strain AB307-0294) protein is UDP-3-O-acylglucosamine N-acyltransferase.